The sequence spans 1257 residues: ATP-binding cassette sub-family B member 5 (1257 aa).

Positions 1–24 are disordered; the sequence is MENSERAEEMQENYQRNGTAEEQP. A glycan (N-linked (GlcNAc...) asparagine) is linked at Asn17. The helical transmembrane segment at 49–69 threads the bilayer; it reads ILGILASLVNGACLPLMPLVL. Residues 49–350 form the ABC transmembrane type-1 1 domain; it reads ILGILASLVN…AAVPHFETFA (302 aa). Asn85 and Asn91 each carry an N-linked (GlcNAc...) asparagine glycan. Transmembrane regions (helical) follow at residues 110 to 130, 181 to 201, 203 to 223, 294 to 314, and 322 to 342; these read YVGIGVAALIFGYIQISLWII, KIALLFQNMSTFSIGLAVGLV, GWKLTLVTLSTSPLIMASAAA, VYFFMNGTYGLAFWYGTSLIL, and IGTVLAVFFSVIHSSYCIGAA. Residues Asn371, Asn390, and Asn423 are each glycosylated (N-linked (GlcNAc...) asparagine). An ABC transporter 1 domain is found at 386–622; sequence VEFKNVSFNY…RGLYYSLVMS (237 aa). Residue 421–428 participates in ATP binding; it reads GLNGSGKS. Helical transmembrane passes span 693 to 713 and 737 to 757; these read VLGTLASVLNGTVHPVFSIIF and MIFVILGVICFVSYFMQGLFY. Positions 693–980 constitute an ABC transmembrane type-1 2 domain; that stretch reads VLGTLASVLN…TLVLAPEYSK (288 aa). Asn789 and Asn819 each carry an N-linked (GlcNAc...) asparagine glycan. The helical transmembrane segment at 827–847 threads the bilayer; that stretch reads VIISFIYGWEMTFLILSIAPV. Asn910 carries an N-linked (GlcNAc...) asparagine glycan. 2 consecutive transmembrane segments (helical) span residues 917-937 and 954-974; these read IIGSCYAFSHAFIYFAYAAGF and MFIVFTAIAYGAMAIGETLVL. The region spanning 1015-1253 is the ABC transporter 2 domain; the sequence is LEFREVSFFY…RDIYFKLVNA (239 aa). 1050–1057 provides a ligand contact to ATP; it reads GSSGCGKS. N-linked (GlcNAc...) asparagine glycosylation is found at Asn1104 and Asn1188.

It belongs to the ABC transporter superfamily. ABCB family. Multidrug resistance exporter (TC 3.A.1.201) subfamily. As to expression, expressed by CD133-expressing progenitor cells among epidermal melanocytes (at protein level). Widely expressed with specific expression in pigment cells. Highly expressed in several malignant tissues: highly expressed in clinical melanomas, with low expression in normal skin. In melanoma, marks malignant melanoma-initiating cells (MMIC), in which clinical virulence resides as a consequence of unlimited self-renewal capacity, resulting in inexorable tumor progression and metastasis. Also highly expressed in a number of leukemia cells. Expressed in basal limbal epithelium.

The protein localises to the cell membrane. The enzyme catalyses daunorubicin(in) + ATP + H2O = daunorubicin(out) + ADP + phosphate + H(+). Energy-dependent efflux transporter responsible for decreased drug accumulation in multidrug-resistant cells. Specifically present in limbal stem cells, where it plays a key role in corneal development and repair. The sequence is that of ATP-binding cassette sub-family B member 5 from Homo sapiens (Human).